The chain runs to 119 residues: Phenol 2-monooxygenase, oxygenase component DmpO (119 aa).

As to quaternary structure, the multicomponent enzyme phenol hydroxylase is formed by DmpL (P1 component), DmpM (P2 component), DmpN (P3 component), DmpO (P4 component) and DmpP (P5 component). The oxygenase component is a dimer composed of three subunits, DmpL, DmpN and DmpO (DmpLNO).

It carries out the reaction phenol + NADH + O2 + H(+) = catechol + NAD(+) + H2O. The protein operates within aromatic compound metabolism; phenol degradation. With respect to regulation, requires DmpM for efficient turnover. The activity of DmpLNO oxygenase is inhibited by dithiothreitol (DTT) by a mechanism apparently involving H(2)O(2) generation. Its function is as follows. Part of a multicomponent enzyme which catalyzes the degradation of phenol and some of its methylated derivatives. DmpL, DmpN and DmpO form the oxygenase component of the complex. Required for growth on phenol and for in vitro phenol hydroxylase activity. In Pseudomonas sp. (strain CF600), this protein is Phenol 2-monooxygenase, oxygenase component DmpO.